The primary structure comprises 393 residues: Phosphoglycerate kinase (393 aa).

Residues Asp-21–Asn-23, His-59–Arg-62, Arg-118, and Arg-151 each bind substrate. ATP-binding positions include Lys-201, Glu-323, and Gly-349–Thr-352.

Belongs to the phosphoglycerate kinase family. As to quaternary structure, monomer.

It is found in the cytoplasm. It carries out the reaction (2R)-3-phosphoglycerate + ATP = (2R)-3-phospho-glyceroyl phosphate + ADP. It participates in carbohydrate degradation; glycolysis; pyruvate from D-glyceraldehyde 3-phosphate: step 2/5. This Pelotomaculum thermopropionicum (strain DSM 13744 / JCM 10971 / SI) protein is Phosphoglycerate kinase.